Reading from the N-terminus, the 230-residue chain is Ion-translocating oxidoreductase complex subunit E (230 aa).

The next 5 membrane-spanning stretches (helical) occupy residues 39–59 (LGLG…VSLV), 69–89 (IPVF…LMNA), 93–113 (GLYL…IIIG), 124–144 (VLPA…VLVV), and 182–202 (AFLL…LIAA).

It belongs to the NqrDE/RnfAE family. The complex is composed of six subunits: RnfA, RnfB, RnfC, RnfD, RnfE and RnfG.

It localises to the cell inner membrane. Part of a membrane-bound complex that couples electron transfer with translocation of ions across the membrane. This chain is Ion-translocating oxidoreductase complex subunit E, found in Vibrio cholerae serotype O1 (strain ATCC 39315 / El Tor Inaba N16961).